Consider the following 525-residue polypeptide: MALSNASSLSTRSIYGGDLSHRPSNRQSSFTFHPAVNTKPKSVNLVTAVHAAEPARNAVSVKESVASSSSGALKWTPESWKLKKALQLPDYPNANELESVLKTIEAFPPIVFAGEARNLEERLADAAVGKAFLLQGGDCAESFKEFNATNIRDTFRVLLQMSIVLTFGGQVPVIKVGRMAGQFAKPRSDAFEEKDGVKLPSYKGDNINGDTFDEKSRIPDPNRMIRAYTQSAATLNLLRAFATGGYAAIQRVTQWNLDFVEQSEQADRYQELANRVDEALGFMSACGLGTDHPLMTTTDFYTSHECLLLPYEQSLTRLDSTSGLYYDCSAHMVWCGERTRQLDGAHVEFLRGIANPLGIKVSNKMDPFELVKLVEILNPNNKPGRITVIVRMGAENMRVKLPHLIRAVRRSGQIVTWVCDPMHGNTIKAPCGLKTRAFDSILAEVRAFLDVHEQEGSHAGGIHLEMTGQNVTECIGGSRTVTYDDLSSRYHTHCDPRLNASQSLELAFIVAERLRKRRTGSQRVS.

Over residues 1 to 13 (MALSNASSLSTRS) the composition is skewed to polar residues. The disordered stretch occupies residues 1–35 (MALSNASSLSTRSIYGGDLSHRPSNRQSSFTFHPA). Residues 1 to 52 (MALSNASSLSTRSIYGGDLSHRPSNRQSSFTFHPAVNTKPKSVNLVTAVHAA) constitute a chloroplast transit peptide.

The protein belongs to the class-II DAHP synthase family.

Its subcellular location is the plastid. The protein localises to the chloroplast. It carries out the reaction D-erythrose 4-phosphate + phosphoenolpyruvate + H2O = 7-phospho-2-dehydro-3-deoxy-D-arabino-heptonate + phosphate. It participates in metabolic intermediate biosynthesis; chorismate biosynthesis; chorismate from D-erythrose 4-phosphate and phosphoenolpyruvate: step 1/7. This is Phospho-2-dehydro-3-deoxyheptonate aldolase 1, chloroplastic (DHS1) from Arabidopsis thaliana (Mouse-ear cress).